Here is a 193-residue protein sequence, read N- to C-terminus: Holliday junction branch migration complex subunit RuvA (193 aa).

Residues 1 to 64 are domain I; the sequence is MIGRIAGTLI…EDAHLLYGFG (64 aa). Residues 65 to 143 form a domain II region; the sequence is TASERNTFRE…AELGHVPGTP (79 aa). Positions 144–151 are flexible linker; that stretch reads AVPDSAVD. Residues 151–193 form a domain III region; the sequence is DVLNALLALGYSEKEAAAAIKQVPAGTGVSDGIKLALKALSKA.

It belongs to the RuvA family. As to quaternary structure, homotetramer. Forms an RuvA(8)-RuvB(12)-Holliday junction (HJ) complex. HJ DNA is sandwiched between 2 RuvA tetramers; dsDNA enters through RuvA and exits via RuvB. An RuvB hexamer assembles on each DNA strand where it exits the tetramer. Each RuvB hexamer is contacted by two RuvA subunits (via domain III) on 2 adjacent RuvB subunits; this complex drives branch migration. In the full resolvosome a probable DNA-RuvA(4)-RuvB(12)-RuvC(2) complex forms which resolves the HJ.

The protein resides in the cytoplasm. In terms of biological role, the RuvA-RuvB-RuvC complex processes Holliday junction (HJ) DNA during genetic recombination and DNA repair, while the RuvA-RuvB complex plays an important role in the rescue of blocked DNA replication forks via replication fork reversal (RFR). RuvA specifically binds to HJ cruciform DNA, conferring on it an open structure. The RuvB hexamer acts as an ATP-dependent pump, pulling dsDNA into and through the RuvAB complex. HJ branch migration allows RuvC to scan DNA until it finds its consensus sequence, where it cleaves and resolves the cruciform DNA. This is Holliday junction branch migration complex subunit RuvA from Cupriavidus necator (strain ATCC 17699 / DSM 428 / KCTC 22496 / NCIMB 10442 / H16 / Stanier 337) (Ralstonia eutropha).